We begin with the raw amino-acid sequence, 464 residues long: Chromosomal replication initiator protein DnaA (464 aa).

Residues 1 to 74 (MDAVGYEVFW…ERKFLELSGH (74 aa)) form a domain I, interacts with DnaA modulators region. Positions 74–117 (HPIKLLFAVKKGTPHGNTAPPKHVHTYLEKNSPAEVPSKKSFHP) are domain II. Positions 118-341 (DLNRDYTFEN…GALTKIIAFI (224 aa)) are domain III, AAA+ region. Residues Gly162, Gly164, Lys165, and Thr166 each contribute to the ATP site. The interval 342-464 (EVSGSITIDI…LKSKVQDSIR (123 aa)) is domain IV, binds dsDNA.

The protein belongs to the DnaA family. In terms of assembly, oligomerizes as a right-handed, spiral filament on DNA at oriC.

It localises to the cytoplasm. Functionally, plays an essential role in the initiation and regulation of chromosomal replication. ATP-DnaA binds to the origin of replication (oriC) to initiate formation of the DNA replication initiation complex once per cell cycle. Binds the DnaA box (a 9 base pair repeat at the origin) and separates the double-stranded (ds)DNA. Forms a right-handed helical filament on oriC DNA; dsDNA binds to the exterior of the filament while single-stranded (ss)DNA is stabiized in the filament's interior. The ATP-DnaA-oriC complex binds and stabilizes one strand of the AT-rich DNA unwinding element (DUE), permitting loading of DNA polymerase. After initiation quickly degrades to an ADP-DnaA complex that is not apt for DNA replication. Binds acidic phospholipids. The sequence is that of Chromosomal replication initiator protein DnaA from Treponema pallidum (strain Nichols).